A 1196-amino-acid polypeptide reads, in one-letter code: MTLYRSLWKKGCMLLLSLVLSLTAFIGSPSNTASAAVADDFQASVMGPLAKINDWGSFKKQLQTLKNNGVYAITTDVWWGYVESAGDNQFDWSYYKTYANAVKEAGLKWVPIISTHKCGGNVGDDCNIPLPSWLSSKGSADEMQFKDESGYANSEALSPLWSGTGKQYDELYASFAENFAGYKSIIPKIYLSGGPSGELRYPSYYPAAGWSYPGRGKFQAYTETAKNAFRTAMNDKYGSLDKINAAWGTKLTSLSQINPPTDGDGFYTNGGYNSAYGKDFLSWYQSVLEKHLGVIGAAAHKNFDSVFGVRIGAKISGLHWQMNNPAMPHGTEQAGGYYDYNRLIQKFKDADLDLTFTCLEMSDSGTAPNYSLPSTLVDTVSSIANAKGVRLNGENALPTGGSGFQKIEEKITKFGYHGFTLLRINNLVNNDGSPTGELSGFKQYIISKAKPDNNGGTGNKVTIYYKKGFNSPYIHYRPAGGSWTAAPGVKMQDAEISGYAKITVDIGSASQLEAAFNDGNNNWDSNNTKNYSFSTGTSTYTPGNSGNAGTITSGAPAGANPGDGGGTTNKVTVYYKKGFNSPYIHYRPAGGSWTAAPGVKMQDAEISGYAKITVDIGSASQLEAAFNDGNNNWDSNNTKNYLFSTGTSTYTPGSNGAAGTIRTGAPSGSVLSVVTSTYATDLNEVTGPIQTEKLSGVSLNVSTSTYAPNSNGVEVTAQTEAPSGAFTSMDLGTLSNPTSLNTDWSKQSIYFIMTDRFSNGDPSNDNYGGFNSNNSDQRKWHGGDFQGIINKLDYIKNMGFTAIWITPVTMQKSEYAYHGYHTYDFYAVDGHLGTMDKLQELVRKAHDKNIAVMVDVVVNHTGDFQPGNGFAKAPFDKADWYHHNGDITDGDYNSNNQWKIENGDVAGLDDLNHENPATANELKNWIKWLLNETGIDGLRLDTVKHVPKGFLKDFDQAANTFTMGEIFHGDPAYVGDYTRYLDAALDFPMYYTIKDVFGHDQSMRKIKDRYSDDRYYRDAQTNGVFIDNHDVKRFLNDASGKPGANYDKWPQLKAALGFTLTSRGIPIIYQGTEQGYSGGDDPANRENMNFNANHDLYQYIAKLNYVRNNHPALQNGSQREKWVDDSFYSFQRSKNGDEAIVFINNSWNSQTRTIGNFDNLSNGTRLTNQLSNDSVQINNGSITVTLAPKEVKVFTK.

A signal peptide spans 1-35; that stretch reads MTLYRSLWKKGCMLLLSLVLSLTAFIGSPSNTASA. Residues 36–454 form a beta-amylase region; the sequence is AVADDFQASV…IISKAKPDNN (419 aa). Position 76 (D76) interacts with substrate. 2 residues coordinate Ca(2+): E83 and D87. Substrate is bound by residues H116 and D124. C118 and C126 form a disulfide bridge. E170 provides a ligand contact to Ca(2+). E198 (proton donor) is an active-site residue. Residues K314, H319, and T357 each contribute to the substrate site. The active-site Proton acceptor is the E394. Residues 395–396 and R423 contribute to the substrate site; that span reads NA. 2 consecutive repeats follow at residues 455–558 and 565–668; these read GGTG…APAG and GGTT…APSG. The segment covering 544–553 has biased composition (polar residues); sequence NSGNAGTITS. A disordered region spans residues 544 to 566; it reads NSGNAGTITSGAPAGANPGDGGG. Residues 669–1196 are alpha-amylase; the sequence is SVLSVVTSTY…APKEVKVFTK (528 aa).

In the N-terminal section; belongs to the glycosyl hydrolase 14 family. It in the C-terminal section; belongs to the glycosyl hydrolase 13 family. Requires Ca(2+) as cofactor.

It localises to the secreted. It catalyses the reaction Hydrolysis of (1-&gt;4)-alpha-D-glucosidic linkages in polysaccharides so as to remove successive maltose units from the non-reducing ends of the chains.. The enzyme catalyses Endohydrolysis of (1-&gt;4)-alpha-D-glucosidic linkages in polysaccharides containing three or more (1-&gt;4)-alpha-linked D-glucose units.. In terms of biological role, the precursor protein is proteolytically cleaved to produce multiform beta-amylases and a 48 kDa alpha-amylase after secretion. This is Beta/alpha-amylase from Paenibacillus polymyxa (Bacillus polymyxa).